We begin with the raw amino-acid sequence, 316 residues long: Very-long-chain 3-oxooacyl-coA reductase let-767 (316 aa).

Residues 52-80 (ITGATDGIGKAYAFELARRGFNVFIVSRT) and D106 each bind NADP(+). S189 lines the substrate pocket. Y202 (proton acceptor) is an active-site residue. K206 lines the NADP(+) pocket.

The protein belongs to the short-chain dehydrogenases/reductases (SDR) family. 17-beta-HSD 3 subfamily.

The catalysed reaction is a very-long-chain (3R)-3-hydroxyacyl-CoA + NADP(+) = a very-long-chain 3-oxoacyl-CoA + NADPH + H(+). It participates in lipid metabolism; fatty acid biosynthesis. Functionally, required for branched chain fatty acid synthesis. Catalyzes the reduction of the 3-ketoacyl-CoA intermediate that is formed in each cycle of fatty acid elongation. Very long-chain fatty acids (VLCFAs) serve as precursors for ceramide and sphingolipids. May also be required for sterol hormone production. The sequence is that of Very-long-chain 3-oxooacyl-coA reductase let-767 from Caenorhabditis briggsae.